Reading from the N-terminus, the 239-residue chain is 2,3,4,5-tetrahydropyridine-2,6-dicarboxylate N-acetyltransferase (239 aa).

This sequence belongs to the transferase hexapeptide repeat family. DapH subfamily.

It carries out the reaction (S)-2,3,4,5-tetrahydrodipicolinate + acetyl-CoA + H2O = L-2-acetamido-6-oxoheptanedioate + CoA. It functions in the pathway amino-acid biosynthesis; L-lysine biosynthesis via DAP pathway; LL-2,6-diaminopimelate from (S)-tetrahydrodipicolinate (acetylase route): step 1/3. Its function is as follows. Catalyzes the transfer of an acetyl group from acetyl-CoA to tetrahydrodipicolinate. The sequence is that of 2,3,4,5-tetrahydropyridine-2,6-dicarboxylate N-acetyltransferase from Staphylococcus aureus (strain MRSA252).